Here is a 366-residue protein sequence, read N- to C-terminus: ERCC4 domain-containing protein EP364R (366 aa).

One can recognise an ERCC4 domain in the interval 3–101 (FLVADHREHH…QLYFFVEGPA (99 aa)).

This sequence belongs to the asfivirus EP364R family.

Functionally, plays a role in the inhibition of type I interferon signaling pathway. Mechanistically, specifically interacts with 2',3'-cGAMP and cleaves it via its phosphodiesterase activity. In turn, prevents 2',3'-cGAMP interaction with host ER-resident STING1 leading to inhibition of downstream signaling pathway and type I interferon production. This African swine fever virus (isolate Pig/Kenya/KEN-50/1950) (ASFV) protein is ERCC4 domain-containing protein EP364R.